The sequence spans 142 residues: Salivary protein 15a (142 aa).

A signal peptide spans 1-20 (MKYLGLALISAVFLIGACQA). Disulfide bonds link cysteine 27–cysteine 44, cysteine 40–cysteine 108, and cysteine 91–cysteine 117.

This sequence belongs to the PBP/GOBP family. Female salivary gland (at protein level).

The protein localises to the secreted. Functionally, inhibits contact coagulation pathway activation in the host by sequestering anionic polymers, such as polyphosphate and dextran sulfate, and thus blocking interaction of protein components of the pathway with negatively charged surfaces. Inhibits dextran sulfate-mediated autoactivation of host coagulation factor XII (F12). Inhibits dextran sulfate-mediated autoactivation of host factor XI (F11). Inhibits polyphosphate-mediated activation of host F11 by thrombin (F2). May inhibit dextran sulfate-mediated bradykinin generation in host plasma. This Phlebotomus duboscqi (Sandfly) protein is Salivary protein 15a.